A 297-amino-acid chain; its full sequence is Glycerol-3-phosphate dehydrogenase [NAD(P)+] (297 aa).

NADPH contacts are provided by W11, R33, and K79. Sn-glycerol 3-phosphate contacts are provided by K79, G107, and S109. A111 is an NADPH binding site. Sn-glycerol 3-phosphate-binding residues include K161, D214, S224, R225, and N226. K161 serves as the catalytic Proton acceptor. R225 serves as a coordination point for NADPH. The NADPH site is built by V249 and E251.

This sequence belongs to the NAD-dependent glycerol-3-phosphate dehydrogenase family.

Its subcellular location is the cytoplasm. It carries out the reaction sn-glycerol 3-phosphate + NAD(+) = dihydroxyacetone phosphate + NADH + H(+). It catalyses the reaction sn-glycerol 3-phosphate + NADP(+) = dihydroxyacetone phosphate + NADPH + H(+). The protein operates within membrane lipid metabolism; glycerophospholipid metabolism. Its function is as follows. Catalyzes the reduction of the glycolytic intermediate dihydroxyacetone phosphate (DHAP) to sn-glycerol 3-phosphate (G3P), the key precursor for phospholipid synthesis. This is Glycerol-3-phosphate dehydrogenase [NAD(P)+] from Campylobacter jejuni subsp. jejuni serotype O:2 (strain ATCC 700819 / NCTC 11168).